The chain runs to 577 residues: Vacuolar membrane amino acid uptake transporter fnx2 (577 aa).

Polar residues predominate over residues 1–14 (MSNPRTKSPNTNRG). Positions 1 to 80 (MSNPRTKSPN…SPHRQDAATT (80 aa)) are disordered. A compositionally biased stretch (low complexity) spans 22 to 39 (SALLNDSLSSLNGNSSYD). A compositionally biased stretch (basic and acidic residues) spans 40-62 (SIKDSSKNNKDVAEVNEYPRRPE). 14 consecutive transmembrane segments (helical) span residues 91–111 (VLPALLLGVVLAALDNTIVAS), 123–145 (FSQVSWTATAYMISCTAFQPLFG), 157–177 (LLAAYCVFGIGCFLCGTSRSL), 186–206 (IAGIGGGGMNSTVSILMSDIV), 217–237 (IINVFFAIGSSLGGPVGGYFA), 244–264 (IGFLIQVPLIAIAFLCVYFTL), 286–306 (LILLIIGVTTMTCAFTLGGNV), 317–337 (LLIASSISYLSFVYVEAFVAF), 356–376 (LCNFFHSVANFGWIYGMPLFF), 391–411 (LIPMIIGSSLGSLLGGAVISL), 418–438 (ITVGSYFFGSVAALFMLRYGY), 448–468 (YPFSGGLGNGIAVTTTLVAII), 490–510 (GCVLGVSISSSIVQTVLGIKL), and 547–567 (LLGSIHYSFLFVSFMFFCAFV).

This sequence belongs to the major facilitator superfamily.

It localises to the vacuole. The protein localises to the membrane. MFS-type transporter involved in vacuolar amino acid uptake. The sequence is that of Vacuolar membrane amino acid uptake transporter fnx2 (fnx2) from Schizosaccharomyces pombe (strain 972 / ATCC 24843) (Fission yeast).